The sequence spans 216 residues: MKKTLLGSLILLAFAGNVQAAANADTKGTVTFFGKVVENTCQVKTDHKNRSVVLNDVGKNSLKDKGNTAMPTPFTITLQNCNLTAANSSTNKANKVGLYFYSWENADKENNFTLKNKTSTSNDFATMVNIQLMESDGTKEIKVVGKETEDFVHKNATGAGVALTQTHPDNDHISGSTQLTGVTGDLPLHFIAQYYSLGSTTAGKVQSSVDFQIAYE.

Residues 1-20 form the signal peptide; the sequence is MKKTLLGSLILLAFAGNVQA. A disulfide bond links Cys-41 and Cys-81.

This sequence belongs to the fimbrial protein family.

The protein resides in the fimbrium. In terms of biological role, mediates adherence to oropharyngeal epithelial cells. Helps the airway colonization process. This is Major fimbrial subunit (hifA) from Haemophilus influenzae.